The following is a 323-amino-acid chain: Beta-ketoacyl-[acyl-carrier-protein] synthase III (323 aa).

Active-site residues include Cys-114 and His-250. The tract at residues 251–255 (QANKR) is ACP-binding. The active site involves Asn-280.

This sequence belongs to the thiolase-like superfamily. FabH family. In terms of assembly, homodimer.

The protein localises to the cytoplasm. It catalyses the reaction malonyl-[ACP] + acetyl-CoA + H(+) = 3-oxobutanoyl-[ACP] + CO2 + CoA. It functions in the pathway lipid metabolism; fatty acid biosynthesis. Catalyzes the condensation reaction of fatty acid synthesis by the addition to an acyl acceptor of two carbons from malonyl-ACP. Catalyzes the first condensation reaction which initiates fatty acid synthesis and may therefore play a role in governing the total rate of fatty acid production. Possesses both acetoacetyl-ACP synthase and acetyl transacylase activities. Its substrate specificity determines the biosynthesis of branched-chain and/or straight-chain of fatty acids. The polypeptide is Beta-ketoacyl-[acyl-carrier-protein] synthase III (Hyphomonas neptunium (strain ATCC 15444)).